A 278-amino-acid chain; its full sequence is Cell division protein FtsQ (278 aa).

The Cytoplasmic segment spans residues 1-6; the sequence is MNATLR. The chain crosses the membrane as a helical span at residues 7–27; that stretch reads ILAWLIAVALVALPVVAVLNG. Residues 28-278 are Periplasmic-facing; it reads WVGAERWPLA…SPFAIPGFKT (251 aa). The POTRA domain occupies 34–103; that stretch reads WPLARLRVSG…DVLEVHVVEH (70 aa).

It belongs to the FtsQ/DivIB family. FtsQ subfamily. As to quaternary structure, part of a complex composed of FtsB, FtsL and FtsQ.

It is found in the cell inner membrane. Essential cell division protein. May link together the upstream cell division proteins, which are predominantly cytoplasmic, with the downstream cell division proteins, which are predominantly periplasmic. May control correct divisome assembly. The protein is Cell division protein FtsQ of Xanthomonas campestris pv. campestris (strain ATCC 33913 / DSM 3586 / NCPPB 528 / LMG 568 / P 25).